The following is a 203-amino-acid chain: Ras-related protein Rab-30 (203 aa).

Residues Val20, Gly21, Lys22, Thr23, Cys24, and Thr41 each contribute to the GTP site. Residue Thr23 coordinates Mg(2+). The tract at residues 36-44 is switch-I; that stretch reads PGQGATIGV. Residues Thr41 and Asp64 each contribute to the Mg(2+) site. The GTP site is built by Gly67, Asn122, Lys123, Asp125, Ala153, and Lys154. Residues 67-83 form a switch-II region; the sequence is GQERFRSITQSYYRSAN. Residues Cys199 and Cys200 are each lipidated (S-geranylgeranyl cysteine). Cysteine methyl ester is present on Cys200. A propeptide spans 201–203 (removed in mature form); sequence NFN.

It belongs to the small GTPase superfamily. Rab family. Mg(2+) serves as cofactor.

It is found in the membrane. The protein resides in the golgi apparatus. Its subcellular location is the trans-Golgi network membrane. It localises to the cis-Golgi network membrane. The protein localises to the golgi apparatus membrane. It is found in the cytoplasm. The protein resides in the cytoplasmic vesicle. Its subcellular location is the autophagosome membrane. It localises to the autolysosome membrane. The enzyme catalyses GTP + H2O = GDP + phosphate + H(+). Regulated by guanine nucleotide exchange factors (GEFs) which promote the exchange of bound GDP for free GTP. Regulated by GTPase activating proteins (GAPs) which increase the GTP hydrolysis activity. Inhibited by GDP dissociation inhibitors (GDIs). In terms of biological role, the small GTPases Rab are key regulators of intracellular membrane trafficking, from the formation of transport vesicles to their fusion with membranes. Rabs cycle between an inactive GDP-bound form and an active GTP-bound form that is able to recruit to membranes different sets of downstream effectors directly responsible for vesicle formation, movement, tethering and fusion. RAB30 is required for maintaining the structural integrity of the Golgi apparatus, possibly by mediating interactions with cytoplasmic scaffolding proteins. Facilitates lipid homeostasis during fasting by regulating hepatic protein and lipid trafficking in a PPAR-alpha-dependent manner. Promotes autophagosome biogenesis during bacterial infection such as group A Streptococcus infection. The sequence is that of Ras-related protein Rab-30 (RAB30) from Bos taurus (Bovine).